The sequence spans 339 residues: Glycerol-3-phosphate dehydrogenase [NAD(P)+] (339 aa).

NADPH is bound by residues serine 15, tyrosine 16, histidine 36, and lysine 110. Residues lysine 110, glycine 139, and threonine 141 each coordinate sn-glycerol 3-phosphate. NADPH is bound at residue alanine 143. The sn-glycerol 3-phosphate site is built by lysine 195, aspartate 248, serine 258, arginine 259, and asparagine 260. The active-site Proton acceptor is the lysine 195. Arginine 259 contributes to the NADPH binding site. 2 residues coordinate NADPH: valine 283 and glutamate 285.

It belongs to the NAD-dependent glycerol-3-phosphate dehydrogenase family.

The protein localises to the cytoplasm. It carries out the reaction sn-glycerol 3-phosphate + NAD(+) = dihydroxyacetone phosphate + NADH + H(+). The catalysed reaction is sn-glycerol 3-phosphate + NADP(+) = dihydroxyacetone phosphate + NADPH + H(+). The protein operates within membrane lipid metabolism; glycerophospholipid metabolism. Its function is as follows. Catalyzes the reduction of the glycolytic intermediate dihydroxyacetone phosphate (DHAP) to sn-glycerol 3-phosphate (G3P), the key precursor for phospholipid synthesis. This chain is Glycerol-3-phosphate dehydrogenase [NAD(P)+], found in Serratia proteamaculans (strain 568).